Here is an 827-residue protein sequence, read N- to C-terminus: Beta-galactosidase 1 (827 aa).

Residues 1-25 (MMGRRGSSWCRWWVALLVLAVAADA) form the signal peptide. Catalysis depends on Glu-187, which acts as the Proton donor. N-linked (GlcNAc...) asparagine glycans are attached at residues Asn-198 and Asn-249. Glu-259 (nucleophile) is an active-site residue. N-linked (GlcNAc...) asparagine glycans are attached at residues Asn-260, Asn-366, Asn-392, Asn-502, Asn-520, Asn-578, Asn-586, and Asn-615. The 82-residue stretch at 746–827 (GEAGDAVTLS…SGVLTVQATC (82 aa)) folds into the SUEL-type lectin domain.

Belongs to the glycosyl hydrolase 35 family.

Its subcellular location is the secreted. The protein localises to the extracellular space. The protein resides in the apoplast. It carries out the reaction Hydrolysis of terminal non-reducing beta-D-galactose residues in beta-D-galactosides.. This is Beta-galactosidase 1 from Oryza sativa subsp. japonica (Rice).